The following is a 585-amino-acid chain: Phosphomethylpyrimidine synthase (585 aa).

Residues 89–107 (RGDTESYEGRHVKPEDNGY) show a composition bias toward basic and acidic residues. The interval 89 to 116 (RGDTESYEGRHVKPEDNGYRSRNGSHQH) is disordered. Substrate contacts are provided by residues Asn199, Met228, Tyr257, His293, 313 to 315 (SRG), 354 to 357 (DGLR), and Glu393. Residue His397 coordinates Zn(2+). Tyr420 lines the substrate pocket. His461 lines the Zn(2+) pocket. [4Fe-4S] cluster-binding residues include Cys541, Cys544, and Cys549.

This sequence belongs to the ThiC family. The cofactor is [4Fe-4S] cluster.

The enzyme catalyses 5-amino-1-(5-phospho-beta-D-ribosyl)imidazole + S-adenosyl-L-methionine = 4-amino-2-methyl-5-(phosphooxymethyl)pyrimidine + CO + 5'-deoxyadenosine + formate + L-methionine + 3 H(+). Its pathway is cofactor biosynthesis; thiamine diphosphate biosynthesis. In terms of biological role, catalyzes the synthesis of the hydroxymethylpyrimidine phosphate (HMP-P) moiety of thiamine from aminoimidazole ribotide (AIR) in a radical S-adenosyl-L-methionine (SAM)-dependent reaction. This is Phosphomethylpyrimidine synthase from Bacillus pumilus (strain SAFR-032).